Consider the following 889-residue polypeptide: Translation initiation factor IF-2 (889 aa).

Residues L158 to Q296 form a disordered region. The span at A209–T228 shows a compositional bias: low complexity. Over residues V238–G270 the composition is skewed to basic and acidic residues. The tr-type G domain occupies P391–K560. The interval G400–T407 is G1. G400–T407 contributes to the GTP binding site. The G2 stretch occupies residues G425–H429. Positions D446–G449 are G3. GTP contacts are provided by residues D446–H450 and N500–D503. The tract at residues N500–D503 is G4. Positions S536–K538 are G5.

This sequence belongs to the TRAFAC class translation factor GTPase superfamily. Classic translation factor GTPase family. IF-2 subfamily.

It is found in the cytoplasm. Its function is as follows. One of the essential components for the initiation of protein synthesis. Protects formylmethionyl-tRNA from spontaneous hydrolysis and promotes its binding to the 30S ribosomal subunits. Also involved in the hydrolysis of GTP during the formation of the 70S ribosomal complex. The sequence is that of Translation initiation factor IF-2 from Nitrosomonas europaea (strain ATCC 19718 / CIP 103999 / KCTC 2705 / NBRC 14298).